Consider the following 351-residue polypeptide: Anthranilate phosphoribosyltransferase (351 aa).

5-phospho-alpha-D-ribose 1-diphosphate contacts are provided by residues Gly-80, 83-84 (GD), Thr-88, 90-93 (NIST), 108-116 (KHGNRSVTS), and Ser-120. Residue Gly-80 coordinates anthranilate. Ser-92 contacts Mg(2+). Residue Asn-111 participates in anthranilate binding. Arg-166 serves as a coordination point for anthranilate. 2 residues coordinate Mg(2+): Asp-229 and Glu-230.

Belongs to the anthranilate phosphoribosyltransferase family. Homodimer. Mg(2+) serves as cofactor.

It carries out the reaction N-(5-phospho-beta-D-ribosyl)anthranilate + diphosphate = 5-phospho-alpha-D-ribose 1-diphosphate + anthranilate. It functions in the pathway amino-acid biosynthesis; L-tryptophan biosynthesis; L-tryptophan from chorismate: step 2/5. Catalyzes the transfer of the phosphoribosyl group of 5-phosphorylribose-1-pyrophosphate (PRPP) to anthranilate to yield N-(5'-phosphoribosyl)-anthranilate (PRA). The sequence is that of Anthranilate phosphoribosyltransferase from Chlorobium limicola (strain DSM 245 / NBRC 103803 / 6330).